The following is a 311-amino-acid chain: Ribosomal RNA large subunit methyltransferase F (311 aa).

The protein belongs to the methyltransferase superfamily. METTL16/RlmF family.

It localises to the cytoplasm. It catalyses the reaction adenosine(1618) in 23S rRNA + S-adenosyl-L-methionine = N(6)-methyladenosine(1618) in 23S rRNA + S-adenosyl-L-homocysteine + H(+). Its function is as follows. Specifically methylates the adenine in position 1618 of 23S rRNA. The sequence is that of Ribosomal RNA large subunit methyltransferase F from Pectobacterium atrosepticum (strain SCRI 1043 / ATCC BAA-672) (Erwinia carotovora subsp. atroseptica).